Consider the following 266-residue polypeptide: Undecaprenyl-diphosphatase 3 (266 aa).

Helical transmembrane passes span 4 to 24 (IEAF…FLPI), 43 to 63 (SGRA…CWLY), 86 to 106 (FSVL…VDFI), 109 to 129 (VLFS…IIFW), 145 to 165 (ITFK…IPGT), 186 to 206 (TEFS…YDLL), 219 to 239 (NIGL…KALV), and 246 to 266 (TLRV…FVML).

The protein belongs to the UppP family.

It localises to the cell inner membrane. The enzyme catalyses di-trans,octa-cis-undecaprenyl diphosphate + H2O = di-trans,octa-cis-undecaprenyl phosphate + phosphate + H(+). In terms of biological role, catalyzes the dephosphorylation of undecaprenyl diphosphate (UPP). Confers resistance to bacitracin. This Acinetobacter baylyi (strain ATCC 33305 / BD413 / ADP1) protein is Undecaprenyl-diphosphatase 3.